A 287-amino-acid polypeptide reads, in one-letter code: Large ribosomal subunit protein uL2 (287 aa).

A disordered region spans residues 216–287; sequence RRPEVRGSVM…SKRGRGGRDA (72 aa). Over residues 271–287 the composition is skewed to basic residues; sequence QRRRRKSSKRGRGGRDA.

Belongs to the universal ribosomal protein uL2 family. In terms of assembly, part of the 50S ribosomal subunit. Forms a bridge to the 30S subunit in the 70S ribosome.

Its function is as follows. One of the primary rRNA binding proteins. Required for association of the 30S and 50S subunits to form the 70S ribosome, for tRNA binding and peptide bond formation. It has been suggested to have peptidyltransferase activity; this is somewhat controversial. Makes several contacts with the 16S rRNA in the 70S ribosome. In Synechococcus sp. (strain ATCC 27144 / PCC 6301 / SAUG 1402/1) (Anacystis nidulans), this protein is Large ribosomal subunit protein uL2.